The primary structure comprises 245 residues: Adenosine 5'-phosphosulfate reductase (245 aa).

The [4Fe-4S] cluster site is built by Cys-124, Cys-125, Cys-205, and Cys-208. The active-site Nucleophile; cysteine thiosulfonate intermediate is the Cys-231.

It belongs to the PAPS reductase family. CysH subfamily. Requires [4Fe-4S] cluster as cofactor.

The protein localises to the cytoplasm. It catalyses the reaction [thioredoxin]-disulfide + sulfite + AMP + 2 H(+) = adenosine 5'-phosphosulfate + [thioredoxin]-dithiol. It participates in sulfur metabolism; hydrogen sulfide biosynthesis; sulfite from sulfate. Its function is as follows. Catalyzes the formation of sulfite from adenosine 5'-phosphosulfate (APS) using thioredoxin as an electron donor. In Chelativorans sp. (strain BNC1), this protein is Adenosine 5'-phosphosulfate reductase.